The chain runs to 243 residues: Lipid II isoglutaminyl synthase (glutamine-hydrolyzing) subunit GatD (243 aa).

Positions 6–197 (IYHFMSDKLN…LHGPILPKNY (192 aa)) constitute a GATase cobBQ-type domain. C94 acts as the Nucleophile in catalysis. Residue R128 coordinates substrate. The active site involves H189.

The protein belongs to the CobB/CobQ family. GatD subfamily. In terms of assembly, forms a heterodimer with MurT.

The enzyme catalyses beta-D-GlcNAc-(1-&gt;4)-Mur2Ac(oyl-L-Ala-gamma-D-Glu-L-Lys-D-Ala-D-Ala)-di-trans,octa-cis-undecaprenyl diphosphate + L-glutamine + ATP + H2O = beta-D-GlcNAc-(1-&gt;4)-Mur2Ac(oyl-L-Ala-D-isoglutaminyl-L-Lys-D-Ala-D-Ala)-di-trans,octa-cis-undecaprenyl diphosphate + L-glutamate + ADP + phosphate + H(+). The catalysed reaction is L-glutamine + H2O = L-glutamate + NH4(+). Its pathway is cell wall biogenesis; peptidoglycan biosynthesis. Functionally, the lipid II isoglutaminyl synthase complex catalyzes the formation of alpha-D-isoglutamine in the cell wall lipid II stem peptide. The GatD subunit catalyzes the hydrolysis of glutamine to glutamate and ammonia. The resulting ammonia molecule is channeled to the active site of MurT. The sequence is that of Lipid II isoglutaminyl synthase (glutamine-hydrolyzing) subunit GatD from Staphylococcus aureus (strain N315).